The following is a 274-amino-acid chain: NH(3)-dependent NAD(+) synthetase (274 aa).

46 to 53 (GISGGQDS) lines the ATP pocket. Residue Asp-52 participates in Mg(2+) binding. Arg-140 contacts deamido-NAD(+). Thr-160 lines the ATP pocket. Glu-165 contacts Mg(2+). 2 residues coordinate deamido-NAD(+): Lys-173 and Asp-180. ATP contacts are provided by Lys-189 and Thr-211. 260–261 (HK) lines the deamido-NAD(+) pocket.

It belongs to the NAD synthetase family. In terms of assembly, homodimer.

The enzyme catalyses deamido-NAD(+) + NH4(+) + ATP = AMP + diphosphate + NAD(+) + H(+). The protein operates within cofactor biosynthesis; NAD(+) biosynthesis; NAD(+) from deamido-NAD(+) (ammonia route): step 1/1. Functionally, catalyzes the ATP-dependent amidation of deamido-NAD to form NAD. Uses ammonia as a nitrogen source. This Streptococcus pneumoniae (strain 70585) protein is NH(3)-dependent NAD(+) synthetase.